Consider the following 333-residue polypeptide: Ornithine carbamoyltransferase (333 aa).

Residues 56–59, Arg107, and 134–137 contribute to the carbamoyl phosphate site; these read STRT and HPTQ. Residues Asn167, Asp231, and 235 to 236 each bind L-ornithine; that span reads SM. Carbamoyl phosphate-binding positions include 273–274 and Arg318; that span reads CL.

It belongs to the aspartate/ornithine carbamoyltransferase superfamily. OTCase family.

It is found in the cytoplasm. It carries out the reaction carbamoyl phosphate + L-ornithine = L-citrulline + phosphate + H(+). It participates in amino-acid degradation; L-arginine degradation via ADI pathway; carbamoyl phosphate from L-arginine: step 2/2. Reversibly catalyzes the transfer of the carbamoyl group from carbamoyl phosphate (CP) to the N(epsilon) atom of ornithine (ORN) to produce L-citrulline. The polypeptide is Ornithine carbamoyltransferase (Clostridium botulinum (strain Langeland / NCTC 10281 / Type F)).